The sequence spans 193 residues: Ion-translocating oxidoreductase complex subunit A (193 aa).

The next 6 membrane-spanning stretches (helical) occupy residues 5–25 (LLIL…FLGL), 38–58 (AMGM…CSYL), 65–85 (APLG…AVVV), 102–122 (VLGI…VALL), 134–154 (ILYG…FSAM), and 171–191 (AIGM…TGLV).

Belongs to the NqrDE/RnfAE family. As to quaternary structure, the complex is composed of six subunits: RnfA, RnfB, RnfC, RnfD, RnfE and RnfG.

It is found in the cell inner membrane. Part of a membrane-bound complex that couples electron transfer with translocation of ions across the membrane. The polypeptide is Ion-translocating oxidoreductase complex subunit A (Hahella chejuensis (strain KCTC 2396)).